Here is a 360-residue protein sequence, read N- to C-terminus: Mitogen-activated protein kinase 14 (360 aa).

Serine 2 carries the N-acetylserine modification. Serine 2 carries the post-translational modification Phosphoserine. Threonine 16 carries the phosphothreonine modification. Positions 24 to 308 (YQNLSPVGSG…AAQALAHAYF (285 aa)) constitute a Protein kinase domain. ATP contacts are provided by residues 30 to 38 (VGSGAYGSV) and lysine 53. N6-acetyllysine is present on lysine 53. Aspartate 150 acts as the Proton acceptor in catalysis. Lysine 152 is subject to N6-acetyllysine. Position 180 is a phosphothreonine; by MAP2K3, MAP2K4, MAP2K6 and autocatalysis (threonine 180). A TXY motif is present at residues 180–182 (TGY). Tyrosine 182 is subject to Phosphotyrosine; by MAP2K3, MAP2K4, MAP2K6 and autocatalysis. Threonine 263 is modified (phosphothreonine). Tyrosine 323 carries the phosphotyrosine; by ZAP70 modification.

The protein belongs to the protein kinase superfamily. CMGC Ser/Thr protein kinase family. MAP kinase subfamily. In terms of assembly, component of a signaling complex containing at least AKAP13, PKN1, MAPK14, ZAK and MAP2K3. Within this complex, AKAP13 interacts directly with PKN1, which in turn recruits MAPK14, MAP2K3 and ZAK. Binds to a kinase interaction motif within the protein tyrosine phosphatase, PTPRR. This interaction retains MAPK14 in the cytoplasm and prevents nuclear accumulation. Interacts with SPAG9 and GADD45A. Interacts with CDC25B, CDC25C, DUSP1, DUSP10, DUSP16, NP60, SUPT20H and TAB1. Interacts with casein kinase II subunits CSNK2A1 and CSNK2B. Interacts with PPM1D. Interacts with CDK5RAP3; recruits PPM1D to MAPK14 and may regulate its dephosphorylation. Interacts with DUSP2; this interaction does not lead to catalytic activation of DUSP2 and dephosphrylation of MAPK14. Mg(2+) serves as cofactor. Dually phosphorylated on Thr-180 and Tyr-182 by the MAP2Ks MAP2K3/MKK3, MAP2K4/MKK4 and MAP2K6/MKK6 in response to inflammatory citokines, environmental stress or growth factors, which activates the enzyme. Dual phosphorylation can also be mediated by TAB1-mediated autophosphorylation. TCR engagement in T-cells also leads to Tyr-323 phosphorylation by ZAP70. Dephosphorylated and inactivated by DUPS1, DUSP10 and DUSP16. PPM1D also mediates dephosphorylation and inactivation of MAPK14. In terms of processing, acetylated at Lys-53 and Lys-152 by KAT2B and EP300. Acetylation at Lys-53 increases the affinity for ATP and enhances kinase activity. Lys-53 and Lys-152 are deacetylated by HDAC3. Post-translationally, ubiquitinated. Ubiquitination leads to degradation by the proteasome pathway.

It is found in the cytoplasm. The protein localises to the nucleus. The catalysed reaction is L-seryl-[protein] + ATP = O-phospho-L-seryl-[protein] + ADP + H(+). The enzyme catalyses L-threonyl-[protein] + ATP = O-phospho-L-threonyl-[protein] + ADP + H(+). Activated by cell stresses such as DNA damage, heat shock, osmotic shock, anisomycin and sodium arsenite, as well as pro-inflammatory stimuli such as bacterial lipopolysaccharide (LPS) and interleukin-1. Activation occurs through dual phosphorylation of Thr-180 and Tyr-182 by either of two dual specificity kinases, MAP2K3/MKK3 or MAP2K6/MKK6, and potentially also MAP2K4/MKK4, as well as by TAB1-mediated autophosphorylation. MAPK14 phosphorylated on both Thr-180 and Tyr-182 is 10-20-fold more active than MAPK14 phosphorylated only on Thr-180, whereas MAPK14 phosphorylated on Tyr-182 alone is inactive. whereas Thr-180 is necessary for catalysis, Tyr-182 may be required for auto-activation and substrate recognition. Phosphorylated at Tyr-323 by ZAP70 in an alternative activation pathway in response to TCR signaling in T-cells. This alternative pathway is inhibited by GADD45A. Inhibited by dual specificity phosphatases, such as DUSP1, DUSP10, and DUSP16. Specifically inhibited by the binding of pyridinyl-imidazole compounds, which are cytokine-suppressive anti-inflammatory drugs (CSAID). SB203580 is an inhibitor of MAPK14. In terms of biological role, serine/threonine kinase which acts as an essential component of the MAP kinase signal transduction pathway. MAPK14 is one of the four p38 MAPKs which play an important role in the cascades of cellular responses evoked by extracellular stimuli such as pro-inflammatory cytokines or physical stress leading to direct activation of transcription factors. Accordingly, p38 MAPKs phosphorylate a broad range of proteins and it has been estimated that they may have approximately 200 to 300 substrates each. Some of the targets are downstream kinases which are activated through phosphorylation and further phosphorylate additional targets. RPS6KA5/MSK1 and RPS6KA4/MSK2 can directly phosphorylate and activate transcription factors such as CREB1, ATF1, the NF-kappa-B isoform RELA/NFKB3, STAT1 and STAT3, but can also phosphorylate histone H3 and the nucleosomal protein HMGN1. RPS6KA5/MSK1 and RPS6KA4/MSK2 play important roles in the rapid induction of immediate-early genes in response to stress or mitogenic stimuli, either by inducing chromatin remodeling or by recruiting the transcription machinery. On the other hand, two other kinase targets, MAPKAPK2/MK2 and MAPKAPK3/MK3, participate in the control of gene expression mostly at the post-transcriptional level, by phosphorylating ZFP36 (tristetraprolin) and ELAVL1, and by regulating EEF2K, which is important for the elongation of mRNA during translation. MKNK1/MNK1 and MKNK2/MNK2, two other kinases activated by p38 MAPKs, regulate protein synthesis by phosphorylating the initiation factor EIF4E2. MAPK14 also interacts with casein kinase II, leading to its activation through autophosphorylation and further phosphorylation of TP53/p53. In the cytoplasm, the p38 MAPK pathway is an important regulator of protein turnover. For example, CFLAR is an inhibitor of TNF-induced apoptosis whose proteasome-mediated degradation is regulated by p38 MAPK phosphorylation. In a similar way, MAPK14 phosphorylates the ubiquitin ligase SIAH2, regulating its activity towards EGLN3. MAPK14 may also inhibit the lysosomal degradation pathway of autophagy by interfering with the intracellular trafficking of the transmembrane protein ATG9. Another function of MAPK14 is to regulate the endocytosis of membrane receptors by different mechanisms that impinge on the small GTPase RAB5A. In addition, clathrin-mediated EGFR internalization induced by inflammatory cytokines and UV irradiation depends on MAPK14-mediated phosphorylation of EGFR itself as well as of RAB5A effectors. Ectodomain shedding of transmembrane proteins is regulated by p38 MAPKs as well. In response to inflammatory stimuli, p38 MAPKs phosphorylate the membrane-associated metalloprotease ADAM17. Such phosphorylation is required for ADAM17-mediated ectodomain shedding of TGF-alpha family ligands, which results in the activation of EGFR signaling and cell proliferation. Another p38 MAPK substrate is FGFR1. FGFR1 can be translocated from the extracellular space into the cytosol and nucleus of target cells, and regulates processes such as rRNA synthesis and cell growth. FGFR1 translocation requires p38 MAPK activation. In the nucleus, many transcription factors are phosphorylated and activated by p38 MAPKs in response to different stimuli. Classical examples include ATF1, ATF2, ATF6, ELK1, PTPRH, DDIT3, TP53/p53 and MEF2C and MEF2A. The p38 MAPKs are emerging as important modulators of gene expression by regulating chromatin modifiers and remodelers. The promoters of several genes involved in the inflammatory response, such as IL6, IL8 and IL12B, display a p38 MAPK-dependent enrichment of histone H3 phosphorylation on 'Ser-10' (H3S10ph) in LPS-stimulated myeloid cells. This phosphorylation enhances the accessibility of the cryptic NF-kappa-B-binding sites marking promoters for increased NF-kappa-B recruitment. Phosphorylates CDC25B and CDC25C which is required for binding to 14-3-3 proteins and leads to initiation of a G2 delay after ultraviolet radiation. Phosphorylates TIAR following DNA damage, releasing TIAR from GADD45A mRNA and preventing mRNA degradation. The p38 MAPKs may also have kinase-independent roles, which are thought to be due to the binding to targets in the absence of phosphorylation. Protein O-Glc-N-acylation catalyzed by the OGT is regulated by MAPK14, and, although OGT does not seem to be phosphorylated by MAPK14, their interaction increases upon MAPK14 activation induced by glucose deprivation. This interaction may regulate OGT activity by recruiting it to specific targets such as neurofilament H, stimulating its O-Glc-N-acylation. Required in mid-fetal development for the growth of embryo-derived blood vessels in the labyrinth layer of the placenta. Also plays an essential role in developmental and stress-induced erythropoiesis, through regulation of EPO gene expression. Phosphorylates S100A9 at 'Thr-113'. The protein is Mitogen-activated protein kinase 14 of Canis lupus familiaris (Dog).